The following is a 357-amino-acid chain: Protein RecA (357 aa).

73–80 contacts ATP; the sequence is GPESSGKT.

It belongs to the RecA family.

The protein localises to the cytoplasm. Functionally, can catalyze the hydrolysis of ATP in the presence of single-stranded DNA, the ATP-dependent uptake of single-stranded DNA by duplex DNA, and the ATP-dependent hybridization of homologous single-stranded DNAs. It interacts with LexA causing its activation and leading to its autocatalytic cleavage. The polypeptide is Protein RecA (Nitratidesulfovibrio vulgaris (strain ATCC 29579 / DSM 644 / CCUG 34227 / NCIMB 8303 / VKM B-1760 / Hildenborough) (Desulfovibrio vulgaris)).